The primary structure comprises 372 residues: MELEGQWWRGQLAADIHQALRYKELKLPSYKGQSPQLSLRRYFADLIAIVSNRFTLCPSARHLAVYLLDLFMDRYDISIQQLHLVALSCLLLASKFEEKEDSVPKLEQLNSLGCMTNMNLVLTKQNLLHMELLLLETFQWNLCLPTAAHFIEYYLSEAVHETDLHDGWPMICLEKTKLYMAKYADYFLEVSLQVAAACVASSRIILRLSPTWPTRLHRLTAYSWDFLVQCIERLLIAHDNDVKEANKQRGQAGPQSAQLSVFQTASQPSRPVHFQQPQYLHQTHQTSLQYRHPTSEQPSCQQIVSTTHTSSYTLQTCPAGFQTSVQGLGHMQTGVGMSLAIPVEVKPCLSVSYNRSYQINEHYPCITPCFER.

The region spanning 15 to 143 (DIHQALRYKE…LLETFQWNLC (129 aa)) is the Cyclin N-terminal domain.

Belongs to the cyclin family.

The protein is Cyclin-J (CCNJ) of Homo sapiens (Human).